The sequence spans 128 residues: Probable 4-amino-4-deoxy-L-arabinose-phosphoundecaprenol flippase subunit ArnF (128 aa).

Residues 1 to 2 (MG) are Cytoplasmic-facing. The helical transmembrane segment at 3-23 (LMWGLFSVIIASAAQLSMGFA) threads the bilayer. Over 24 to 35 (ASHLPPMTHLWD) the chain is Periplasmic. The chain crosses the membrane as a helical span at residues 36 to 56 (FIAALLAFGLDARILLLGLLG). The Cytoplasmic segment spans residues 57–76 (YLLSVFCWYKTLHKLALSKA). Residues 77–97 (YALLSMSYVLVWIASMVLPGW) traverse the membrane as a helical segment. Residues 98–100 (EGT) are Periplasmic-facing. A helical membrane pass occupies residues 101-121 (FSLKALLGVACIMSGLMLIFL). Over 122–128 (PTTKQRY) the chain is Cytoplasmic.

The protein belongs to the ArnF family. As to quaternary structure, heterodimer of ArnE and ArnF.

It is found in the cell inner membrane. It functions in the pathway bacterial outer membrane biogenesis; lipopolysaccharide biosynthesis. Functionally, translocates 4-amino-4-deoxy-L-arabinose-phosphoundecaprenol (alpha-L-Ara4N-phosphoundecaprenol) from the cytoplasmic to the periplasmic side of the inner membrane. The sequence is that of Probable 4-amino-4-deoxy-L-arabinose-phosphoundecaprenol flippase subunit ArnF from Escherichia coli O45:K1 (strain S88 / ExPEC).